A 284-amino-acid polypeptide reads, in one-letter code: Tetraspanin-10 (284 aa).

Residues 1-11 (MGMGTSTFVIR) are Cytoplasmic-facing. A helical membrane pass occupies residues 12–32 (WVNLLTMLLAVAVIIFGVWMS). Residues 33 to 43 (THNDGCRRSLT) lie on the Extracellular side of the membrane. The chain crosses the membrane as a helical span at residues 44 to 64 (FPVIALGGFIFLISIIGFLGA). At 65 to 75 (CKRSVALLWIY) the chain is on the cytoplasmic side. Residues 76-96 (LAVLLIVLIAILVFTVLAFIV) form a helical membrane-spanning segment. The Extracellular portion of the chain corresponds to 97-228 (TNNGSGHTNP…AGVAQYMKTE (132 aa)). Residues N99, N128, and N183 are each glycosylated (N-linked (GlcNAc...) asparagine). Residues 229-249 (WRLVAIFNVVLFVVLISSLLS) traverse the membrane as a helical segment. Topologically, residues 250 to 284 (TRFDSEQSFGLLNGLVQISNITFKDCQTTTVPKQF) are cytoplasmic.

This sequence belongs to the tetraspanin (TM4SF) family.

The protein localises to the membrane. May be involved in the regulation of cell differentiation. In Arabidopsis thaliana (Mouse-ear cress), this protein is Tetraspanin-10 (TET10).